The chain runs to 465 residues: Cysteine--tRNA ligase (465 aa).

Position 30 (C30) interacts with Zn(2+). The 'HIGH' region motif lies at 32-42 (ITVYDYCHIGH). Positions 214, 239, and 243 each coordinate Zn(2+). The 'KMSKS' region motif lies at 271–275 (KMSKS). An ATP-binding site is contributed by K274.

This sequence belongs to the class-I aminoacyl-tRNA synthetase family. In terms of assembly, monomer. It depends on Zn(2+) as a cofactor.

The protein resides in the cytoplasm. It carries out the reaction tRNA(Cys) + L-cysteine + ATP = L-cysteinyl-tRNA(Cys) + AMP + diphosphate. This Burkholderia mallei (strain NCTC 10229) protein is Cysteine--tRNA ligase.